We begin with the raw amino-acid sequence, 542 residues long: Mitochondrial distribution and morphology protein 34 (542 aa).

Residues M1–Q216 form the SMP-LTD domain. Disordered stretches follow at residues L27–P58 and S372–V435. Residues T31–T48 show a composition bias toward low complexity. Positions D49–P58 are enriched in basic and acidic residues. Residues I379–K394 show a composition bias toward basic residues. Low complexity predominate over residues S403–S414.

This sequence belongs to the MDM34 family. Component of the ER-mitochondria encounter structure (ERMES) or MDM complex, composed of MMM1, MDM10, MDM12 and MDM34.

It is found in the mitochondrion outer membrane. Component of the ERMES/MDM complex, which serves as a molecular tether to connect the endoplasmic reticulum (ER) and mitochondria. Components of this complex are involved in the control of mitochondrial shape and protein biogenesis, and function in nonvesicular lipid trafficking between the ER and mitochondria. MDM34 is required for the interaction of the ER-resident membrane protein MMM1 and the outer mitochondrial membrane-resident beta-barrel protein MDM10. The chain is Mitochondrial distribution and morphology protein 34 from Lachancea thermotolerans (strain ATCC 56472 / CBS 6340 / NRRL Y-8284) (Yeast).